Consider the following 474-residue polypeptide: Gamma-aminobutyric acid receptor subunit beta-1 (474 aa).

The signal sequence occupies residues 1-25; the sequence is MWTVQNRESLGLLSFPVMVAMVCCA. The Extracellular portion of the chain corresponds to 26–245; it reads HSSNEPSNMS…SFRLKRNIGY (220 aa). N-linked (GlcNAc...) asparagine glycans are attached at residues Asn33 and Asn105. Tyr122 contacts histamine. Cys161 and Cys175 are disulfide-bonded. Residue Asn174 is glycosylated (N-linked (GlcNAc...) asparagine). Residues 181 to 182 and Thr227 each bind histamine; that span reads SY. 4-aminobutanoate contacts are provided by Tyr182 and Thr227. 3 helical membrane passes run 246 to 267, 271 to 293, and 305 to 327; these read FILQ…SFWI, ASAA…STHL, and AIDI…YAFV. The Cytoplasmic portion of the chain corresponds to 328–451; the sequence is NYIFFGKGPQ…DLTDVNSIDK (124 aa). Residues 452–473 traverse the membrane as a helical segment; the sequence is WSRMFFPITFSLFNVVYWLYYV.

This sequence belongs to the ligand-gated ion channel (TC 1.A.9) family. Gamma-aminobutyric acid receptor (TC 1.A.9.5) subfamily. GABRB1 sub-subfamily. As to quaternary structure, heteropentamer, formed by a combination of alpha (GABRA1-6), beta (GABRB1-3), gamma (GABRG1-3), delta (GABRD), epsilon (GABRE), rho (GABRR1-3), pi (GABRP) and theta (GABRQ) chains, each subunit exhibiting distinct physiological and pharmacological properties. Binds UBQLN1.

Its subcellular location is the postsynaptic cell membrane. The protein localises to the cell membrane. The enzyme catalyses chloride(in) = chloride(out). Its activity is regulated as follows. Potentiated by histamine. Beta subunit of the heteropentameric ligand-gated chloride channel gated by gamma-aminobutyric acid (GABA), a major inhibitory neurotransmitter in the brain. GABA-gated chloride channels, also named GABA(A) receptors (GABAAR), consist of five subunits arranged around a central pore and contain GABA active binding site(s) located at the alpha and beta subunit interface(s). When activated by GABA, GABAARs selectively allow the flow of chloride anions across the cell membrane down their electrochemical gradient. Chloride influx into the postsynaptic neuron following GABAAR opening decreases the neuron ability to generate a new action potential, thereby reducing nerve transmission. Beta-containing GABAARs can simultaneously bind GABA and histamine where histamine binds at the interface of two neighboring beta subunits, which may be involved in the regulation of sleep and wakefulness. This chain is Gamma-aminobutyric acid receptor subunit beta-1, found in Rattus norvegicus (Rat).